Consider the following 295-residue polypeptide: Non-selective voltage-gated ion channel VDAC2 (295 aa).

Lysine 24 and lysine 32 together coordinate ATP. The residue at position 32 (lysine 32) is an N6-acetyllysine; alternate. Lysine 32 is modified (N6-succinyllysine; alternate). A Glycyl lysine isopeptide (Lys-Gly) (interchain with G-Cter in ubiquitin); alternate cross-link involves residue lysine 32. 2 beta stranded membrane passes run 38 to 45 (LVKLDVKT) and 51 to 60 (VEFSTSGSSN). Lysine 65 is covalently cross-linked (Glycyl lysine isopeptide (Lys-Gly) (interchain with G-Cter in ubiquitin)). A beta stranded transmembrane segment spans residues 66–76 (VSGTLETKYKW). Phosphotyrosine is present on tyrosine 79. A run of 3 beta stranded transmembrane segments spans residues 81–88 (LTFTEKWN), 92–100 (TLGTEIAIE), and 107–116 (LKLTFDTTFS). The residue at position 119 (threonine 119) is a Phosphothreonine. Lysine 121 bears the N6-acetyllysine; alternate mark. Residue lysine 121 forms a Glycyl lysine isopeptide (Lys-Gly) (interchain with G-Cter in ubiquitin); alternate linkage. Lysine 122 is covalently cross-linked (Glycyl lysine isopeptide (Lys-Gly) (interchain with G-Cter in ubiquitin)). The next 4 membrane-spanning stretches (beta stranded) occupy residues 122 to 131 (KSGKIKSAYK), 135 to 144 (INLGCDVDFD), 148 to 157 (PAIHGSAVFG), and 161 to 170 (WLAGYQMTFD). A Glycyl lysine isopeptide (Lys-Gly) (interchain with G-Cter in ubiquitin) cross-link involves residue lysine 173. A run of 6 beta stranded transmembrane segments spans residues 177–187 (TRSNFAVGYRT), 190–197 (FQLHTNVN), 201–210 (EFGGSIYQKV), 214–222 (FDTSVNLAW), 229–238 (TRFGIAAKYQ), and 243–250 (ASISAKVN). The residue at position 252 (serine 252) is a Phosphoserine. NAD(+) is bound by residues 254-256 (LIG) and 272-276 (SALVD). Transmembrane regions (beta stranded) follow at residues 254-263 (LIGVGYTQTL) and 267-275 (VKLTLSALV). Lysine 278 is modified (N6-acetyllysine; alternate). Residue lysine 278 forms a Glycyl lysine isopeptide (Lys-Gly) (interchain with G-Cter in ubiquitin); alternate linkage. The chain crosses the membrane as a beta stranded span at residues 285 to 295 (HKLGLALELEA).

Belongs to the eukaryotic mitochondrial porin family. Monomer, homodimer and higher order oligomers; formation of higher order structures is necessary for scramblase activity. Interacts with ARMC12 in a TBC1D21-dependent manner. Interacts with KLC3. Interacts with SPATA33. Interacts with PPP3CC in a SPATA33-dependent manner. In terms of processing, ubiquitinated by PRKN during mitophagy, leading to its degradation and enhancement of mitophagy. Deubiquitinated by USP30. Highest levels of expression detected in testis, less but still abundant expression in heart, kidney, brain, and skeletal muscle. Expressed in the sperm midpiece (at protein level).

It is found in the mitochondrion outer membrane. The protein resides in the membrane. It catalyses the reaction chloride(in) = chloride(out). The enzyme catalyses K(+)(in) = K(+)(out). The catalysed reaction is a 1,2-diacyl-sn-glycero-3-phospho-L-serine(in) = a 1,2-diacyl-sn-glycero-3-phospho-L-serine(out). It carries out the reaction a 1,2-diacyl-sn-glycero-3-phosphocholine(in) = a 1,2-diacyl-sn-glycero-3-phosphocholine(out). It catalyses the reaction a 1,2-diacyl-sn-glycero-3-phospho-(1D-myo-inositol)(in) = a 1,2-diacyl-sn-glycero-3-phospho-(1D-myo-inositol)(out). Its function is as follows. Non-selective voltage-gated ion channel that mediates the transport of anions and cations through the mitochondrion outer membrane and plasma membrane. The channel adopts an open conformation at zero mV and a closed conformation at both positive and negative potentials. There are two populations of channels; the main that functions in a lower open-state conductance with lower ion selectivity, that switch, in a voltage-dependent manner, from the open to a low-conducting 'closed' state and the other that has a normal ion selectivity in the typical high conductance, 'open' state. Binds various lipids, including the sphingolipid ceramide, the phospholipid phosphatidylcholine, and the sterols cholesterol and oxysterol. Binding of ceramide promotes the mitochondrial outer membrane permeabilization (MOMP) apoptotic pathway. Functionally, catalyzes the scrambling of phospholipids across the outer mitochondrial membrane; the mechanism is unrelated to channel activity and is capable of translocating both anionic and zwitterionic phospholipids. This Mus musculus (Mouse) protein is Non-selective voltage-gated ion channel VDAC2.